The primary structure comprises 817 residues: LPS-assembly protein LptD (817 aa).

Positions 1–26 are cleaved as a signal peptide; it reads MPALVVSPDLVRGAAGASAAPTPAPA. A disordered region spans residues 1–101; the sequence is MPALVVSPDL…ARKPGSTEVR (101 aa). A compositionally biased stretch (low complexity) spans 13-90; it reads GAAGASAAPT…PAASASPADA (78 aa).

It belongs to the LptD family. In terms of assembly, component of the lipopolysaccharide transport and assembly complex. Interacts with LptE and LptA.

The protein localises to the cell outer membrane. In terms of biological role, together with LptE, is involved in the assembly of lipopolysaccharide (LPS) at the surface of the outer membrane. This is LPS-assembly protein LptD from Azoarcus sp. (strain BH72).